A 289-amino-acid chain; its full sequence is MQPPKTHNHIELAFEIDSDLYELYIAVLSQEGIEYFLEEDKKLLAYLPESEWNAEKEESIKTLLRETFGSAPHFTASFMADRNWNAEWEAHLQPVEISNRFLIIQHQKEYDVKPDQIVIAINPKMSFGTGYHATTRLMLRQMEELDLADKKIMDIGTGTGVLAIAARKLGNRNPILAFDNNAWAAENAVENVAENDVADIQVELLDAEEEMVANLKEGYDLILANINKNVLDRILPVIRRHAPNAQVLLSGVLVYDEPWLKKLLKRIDYTNVKTIYEDEWLSALIEPKN.

S-adenosyl-L-methionine contacts are provided by Thr135, Gly156, Asp179, and Asn225.

This sequence belongs to the methyltransferase superfamily. PrmA family.

It is found in the cytoplasm. The enzyme catalyses L-lysyl-[protein] + 3 S-adenosyl-L-methionine = N(6),N(6),N(6)-trimethyl-L-lysyl-[protein] + 3 S-adenosyl-L-homocysteine + 3 H(+). Its function is as follows. Methylates ribosomal protein L11. The sequence is that of Ribosomal protein L11 methyltransferase from Chlorobaculum parvum (strain DSM 263 / NCIMB 8327) (Chlorobium vibrioforme subsp. thiosulfatophilum).